The primary structure comprises 557 residues: CTP synthase (557 aa).

Residues 1–272 (MARSKIVKHI…DSLVLKKLML (272 aa)) are amidoligase domain. Serine 18 serves as a coordination point for CTP. Position 18 (serine 18) interacts with UTP. 19-24 (SLGKGI) contacts ATP. Tyrosine 59 lines the L-glutamine pocket. Aspartate 76 is an ATP binding site. Mg(2+)-binding residues include aspartate 76 and glutamate 146. Residues 153-155 (DIE), 193-198 (KTKPTQ), and lysine 229 each bind CTP. UTP contacts are provided by residues 193–198 (KTKPTQ) and lysine 229. The Glutamine amidotransferase type-1 domain maps to 299 to 543 (EIGVCGKYTK…VAEAKKFRDE (245 aa)). Residue glycine 363 coordinates L-glutamine. The Nucleophile; for glutamine hydrolysis role is filled by cysteine 390. Residues 391-394 (LGMQ), glutamate 414, and arginine 471 each bind L-glutamine. Catalysis depends on residues histidine 516 and glutamate 518.

Belongs to the CTP synthase family. In terms of assembly, homotetramer.

It carries out the reaction UTP + L-glutamine + ATP + H2O = CTP + L-glutamate + ADP + phosphate + 2 H(+). The enzyme catalyses L-glutamine + H2O = L-glutamate + NH4(+). It catalyses the reaction UTP + NH4(+) + ATP = CTP + ADP + phosphate + 2 H(+). It participates in pyrimidine metabolism; CTP biosynthesis via de novo pathway; CTP from UDP: step 2/2. Its activity is regulated as follows. Allosterically activated by GTP, when glutamine is the substrate; GTP has no effect on the reaction when ammonia is the substrate. The allosteric effector GTP functions by stabilizing the protein conformation that binds the tetrahedral intermediate(s) formed during glutamine hydrolysis. Inhibited by the product CTP, via allosteric rather than competitive inhibition. Functionally, catalyzes the ATP-dependent amination of UTP to CTP with either L-glutamine or ammonia as the source of nitrogen. Regulates intracellular CTP levels through interactions with the four ribonucleotide triphosphates. The protein is CTP synthase of Chloroherpeton thalassium (strain ATCC 35110 / GB-78).